We begin with the raw amino-acid sequence, 309 residues long: NAD-dependent protein deacylase sirtuin-5B, mitochondrial (309 aa).

A mitochondrion-targeting transit peptide spans 1–35; sequence MILLPFHTRRLVSHVYCGLKPASQNKGIALEMTRP. The Deacetylase sirtuin-type domain maps to 36–306; the sequence is SSNLANFREA…PPALARHETE (271 aa). 57–76 lines the NAD(+) pocket; it reads GAGVSAESGVPTIIGAGGYW. Residues Tyr-101 and Arg-104 each coordinate substrate. 139-142 serves as a coordination point for NAD(+); the sequence is QNID. His-157 (proton acceptor) is an active-site residue. Cys-165, Cys-168, Cys-206, and Cys-211 together coordinate Zn(2+). Residues 248–250, 274–276, and Cys-292 contribute to the NAD(+) site; these read GTS and NME.

Belongs to the sirtuin family. Class III subfamily. It depends on Zn(2+) as a cofactor.

Its subcellular location is the mitochondrion. The protein resides in the cytoplasm. It localises to the cytosol. It is found in the nucleus. The catalysed reaction is N(6)-malonyl-L-lysyl-[protein] + NAD(+) + H2O = 2''-O-malonyl-ADP-D-ribose + nicotinamide + L-lysyl-[protein]. It catalyses the reaction N(6)-succinyl-L-lysyl-[protein] + NAD(+) + H2O = 2''-O-succinyl-ADP-D-ribose + nicotinamide + L-lysyl-[protein]. It carries out the reaction N(6)-glutaryl-L-lysyl-[protein] + NAD(+) + H2O = 2''-O-glutaryl-ADP-D-ribose + nicotinamide + L-lysyl-[protein]. Its function is as follows. NAD-dependent lysine demalonylase, desuccinylase and deglutarylase that specifically removes malonyl, succinyl and glutaryl groups on target proteins. Has weak NAD-dependent protein deacetylase activity; however this activity may not be physiologically relevant in vivo. This is NAD-dependent protein deacylase sirtuin-5B, mitochondrial (sirt5-b) from Xenopus laevis (African clawed frog).